The sequence spans 143 residues: Large ribosomal subunit protein uL13 (143 aa).

It belongs to the universal ribosomal protein uL13 family. In terms of assembly, part of the 50S ribosomal subunit.

Functionally, this protein is one of the early assembly proteins of the 50S ribosomal subunit, although it is not seen to bind rRNA by itself. It is important during the early stages of 50S assembly. In Neisseria gonorrhoeae (strain ATCC 700825 / FA 1090), this protein is Large ribosomal subunit protein uL13.